A 76-amino-acid chain; its full sequence is MIFEKIKDLIATQLSLDTSTITLDTRFKEDLGLDSLDALELVMEAEKTFQINISDATLQNFKTVQDIVFYITKNTS.

A Carrier domain is found at 1 to 75 (MIFEKIKDLI…DIVFYITKNT (75 aa)). Ser-35 carries the post-translational modification O-(pantetheine 4'-phosphoryl)serine.

The protein belongs to the acyl carrier protein (ACP) family. 4'-phosphopantetheine is transferred from CoA to a specific serine of apo-ACP by AcpS. This modification is essential for activity because fatty acids are bound in thioester linkage to the sulfhydryl of the prosthetic group.

It is found in the cytoplasm. The protein operates within lipid metabolism; fatty acid biosynthesis. In terms of biological role, carrier of the growing fatty acid chain in fatty acid biosynthesis. The chain is Acyl carrier protein from Aster yellows witches'-broom phytoplasma (strain AYWB).